A 751-amino-acid chain; its full sequence is Ecdysteroid-phosphate phosphatase (751 aa).

The UBA domain maps to 16–60 (CISKQHLTPLQTLLQMGFPRHRAEKALASTGNRGVQIASDWLLAH). One can recognise an SH3 domain in the interval 271 to 336 (ATKQVQKVVY…PVNYTERTAE (66 aa)). Disordered stretches follow at residues 367-394 (GRSISTEPDDRQNTAHPDIIEGSSFEES) and 458-484 (EPPAAQPPRPDDTLSVHSDHSLHPGSL). Over residues 466–479 (RPDDTLSVHSDHSL) the composition is skewed to basic and acidic residues. The phosphatase-like stretch occupies residues 490–751 (KNRKIYIMRH…RFEWNALSAT (262 aa)). Residue Arg498 is part of the active site. His499 (tele-phosphohistidine intermediate) is an active-site residue. His681 is an active-site residue.

It is found in the cytoplasm. It localises to the cytosol. Its subcellular location is the nucleus. The enzyme catalyses ecdysone 22-phosphate + H2O = ecdysone + phosphate. The catalysed reaction is 20-hydroxyecdysone 22-phosphate + H2O = 20-hydroxyecdysone + phosphate. It catalyses the reaction 2-deoxyecdysone 22-phosphate + H2O = 2-deoxyecdysone + phosphate. Its function is as follows. Steroid phosphatase that dephosphorylates ecdysteroids such as ecdysone 22-phosphate (E22P), 3-epi-ecdysone 22-phosphate (E22P) and 3-epi-ecdysone 2-phosphate (E2P). Likely catalyzes the conversion of inactive phosphorylated ecdysteroids into their active forms. Shows high activity towards ecdysone 22-phosphate (E22P), but is also significantly active against 3-epi-ecdysone 22-phosphate (E22P) and 3-epi-ecdysone 2-phosphate (E2P). Also displays acid phosphatase activity towards 4-nitrophenyl phosphate (pNNP) in vitro. Has no activity towards 3-epi-ecdysone 3-phosphate (E3P). In Drosophila melanogaster (Fruit fly), this protein is Ecdysteroid-phosphate phosphatase.